Here is a 257-residue protein sequence, read N- to C-terminus: MMIQLRSEIKTDENLTALFRRQCEAAGLIHDETSPLALVQAAMGEHDWRLELRKLDEPKLGAVFVDFAGGVMAHRRKFGGGRGEAVAKAIGVKGEELPTVIDATAGLGRDAFVLASVGCRVRLVERHPVVRLLLQDGLRRAYDDSEIGESMRRNMQLLTVNHIAELDPARDFADAVYLDPMYPHKQKSALVKKEMRVFQHLVGTDSDADALLEPARKLARKRVVVKRPDYAGFLAQTPPHFSRETKNHRFDIYLPLI.

S-adenosyl-L-methionine is bound by residues 109–110 (RD), 125–126 (ER), and D179.

The protein belongs to the methyltransferase superfamily. RsmJ family.

It is found in the cytoplasm. It catalyses the reaction guanosine(1516) in 16S rRNA + S-adenosyl-L-methionine = N(2)-methylguanosine(1516) in 16S rRNA + S-adenosyl-L-homocysteine + H(+). In terms of biological role, specifically methylates the guanosine in position 1516 of 16S rRNA. This chain is Ribosomal RNA small subunit methyltransferase J, found in Actinobacillus succinogenes (strain ATCC 55618 / DSM 22257 / CCUG 43843 / 130Z).